A 1078-amino-acid polypeptide reads, in one-letter code: Cell wall acid trehalase ATC1 (1078 aa).

The first 54 residues, 1 to 54 (MAANSSFFLADNCAPHNQSFIQFCIHAASKKKGRIALMCLANLFLLFSFHLLYA), serve as a signal peptide directing secretion. 8 N-linked (GlcNAc...) asparagine glycosylation sites follow: Asn-4, Asn-17, Asn-150, Asn-184, Asn-242, Asn-287, Asn-301, and Asn-350. 478–479 (WD) provides a ligand contact to substrate. N-linked (GlcNAc...) asparagine glycosylation is found at Asn-532, Asn-591, and Asn-601. The active-site Proton donor is Glu-607. 2 N-linked (GlcNAc...) asparagine glycosylation sites follow: Asn-661 and Asn-670. Residue 676-677 (KQ) participates in substrate binding. N-linked (GlcNAc...) asparagine glycans are attached at residues Asn-829, Asn-837, Asn-904, Asn-922, Asn-931, Asn-946, Asn-1003, and Asn-1037.

This sequence belongs to the glycosyl hydrolase 65 family.

Its subcellular location is the secreted. The protein localises to the cell wall. The enzyme catalyses alpha,alpha-trehalose + H2O = alpha-D-glucose + beta-D-glucose. Its function is as follows. Cell wall acid trehalase that catalyzes hydrolysis of the disaccharide trehalose and required for growth on trehalose as carbon source. Plays a role in dimorphic conversion and virulence. The sequence is that of Cell wall acid trehalase ATC1 (ATC1) from Candida albicans (strain SC5314 / ATCC MYA-2876) (Yeast).